A 366-amino-acid chain; its full sequence is DNA-directed RNA polymerase subunit alpha (366 aa).

The interval 1 to 233 is alpha N-terminal domain (alpha-NTD); the sequence is MVREKVRVST…DLFLPFLHAE (233 aa). The tract at residues 264–366 is alpha C-terminal domain (alpha-CTD); that stretch reads KNEIALKSIF…KDEMGFESLE (103 aa).

The protein belongs to the RNA polymerase alpha chain family. In plastids the minimal PEP RNA polymerase catalytic core is composed of four subunits: alpha, beta, beta', and beta''. When a (nuclear-encoded) sigma factor is associated with the core the holoenzyme is formed, which can initiate transcription.

Its subcellular location is the plastid. The protein localises to the chloroplast. It carries out the reaction RNA(n) + a ribonucleoside 5'-triphosphate = RNA(n+1) + diphosphate. Its function is as follows. DNA-dependent RNA polymerase catalyzes the transcription of DNA into RNA using the four ribonucleoside triphosphates as substrates. In Oenothera elata subsp. hookeri (Hooker's evening primrose), this protein is DNA-directed RNA polymerase subunit alpha.